The sequence spans 488 residues: Glutamyl-tRNA(Gln) amidotransferase subunit A (488 aa).

Catalysis depends on charge relay system residues lysine 77 and serine 152. The active-site Acyl-ester intermediate is serine 176.

Belongs to the amidase family. GatA subfamily. Heterotrimer of A, B and C subunits.

It carries out the reaction L-glutamyl-tRNA(Gln) + L-glutamine + ATP + H2O = L-glutaminyl-tRNA(Gln) + L-glutamate + ADP + phosphate + H(+). In terms of biological role, allows the formation of correctly charged Gln-tRNA(Gln) through the transamidation of misacylated Glu-tRNA(Gln) in organisms which lack glutaminyl-tRNA synthetase. The reaction takes place in the presence of glutamine and ATP through an activated gamma-phospho-Glu-tRNA(Gln). In Streptococcus thermophilus (strain CNRZ 1066), this protein is Glutamyl-tRNA(Gln) amidotransferase subunit A.